A 400-amino-acid chain; its full sequence is Homoserine O-acetyltransferase (400 aa).

The region spanning 64 to 373 (NAILICHALT…TDRGHDAFLL (310 aa)) is the AB hydrolase-1 domain. Ser-169 (nucleophile) is an active-site residue. Arg-239 is a binding site for substrate. Residues Asp-335 and His-368 contribute to the active site. Asp-369 is a binding site for substrate.

It belongs to the AB hydrolase superfamily. MetX family. In terms of assembly, homodimer.

It is found in the cytoplasm. The enzyme catalyses L-homoserine + acetyl-CoA = O-acetyl-L-homoserine + CoA. Its pathway is amino-acid biosynthesis; L-methionine biosynthesis via de novo pathway; O-acetyl-L-homoserine from L-homoserine: step 1/1. Functionally, transfers an acetyl group from acetyl-CoA to L-homoserine, forming acetyl-L-homoserine. The sequence is that of Homoserine O-acetyltransferase from Bradyrhizobium diazoefficiens (strain JCM 10833 / BCRC 13528 / IAM 13628 / NBRC 14792 / USDA 110).